The primary structure comprises 205 residues: Protein-L-isoaspartate O-methyltransferase (205 aa).

The active site involves S56.

This sequence belongs to the methyltransferase superfamily. L-isoaspartyl/D-aspartyl protein methyltransferase family.

The protein resides in the cytoplasm. The catalysed reaction is [protein]-L-isoaspartate + S-adenosyl-L-methionine = [protein]-L-isoaspartate alpha-methyl ester + S-adenosyl-L-homocysteine. Functionally, catalyzes the methyl esterification of L-isoaspartyl residues in peptides and proteins that result from spontaneous decomposition of normal L-aspartyl and L-asparaginyl residues. It plays a role in the repair and/or degradation of damaged proteins. The chain is Protein-L-isoaspartate O-methyltransferase from Pyrobaculum arsenaticum (strain DSM 13514 / JCM 11321 / PZ6).